The following is a 124-amino-acid chain: UPF0357 protein C1687.07 (124 aa).

A signal peptide spans 1 to 24 (MASFHIIVSYVTVVLAIIIAITFA).

Belongs to the UPF0357 family.

This chain is UPF0357 protein C1687.07, found in Schizosaccharomyces pombe (strain 972 / ATCC 24843) (Fission yeast).